Consider the following 101-residue polypeptide: Small ribosomal subunit protein uS14A (101 aa).

Disordered regions lie at residues 1–21 (MAKK…AHHA) and 49–73 (QRLP…PRGT). 2 stretches are compositionally biased toward basic and acidic residues: residues 8 to 21 (AKNE…AHHA) and 61 to 70 (RNRDAADGRP).

This sequence belongs to the universal ribosomal protein uS14 family. As to quaternary structure, part of the 30S ribosomal subunit. Contacts proteins S3 and S10.

Functionally, binds 16S rRNA, required for the assembly of 30S particles and may also be responsible for determining the conformation of the 16S rRNA at the A site. The protein is Small ribosomal subunit protein uS14A of Kineococcus radiotolerans (strain ATCC BAA-149 / DSM 14245 / SRS30216).